We begin with the raw amino-acid sequence, 65 residues long: Weak toxin CM-10 (65 aa).

5 disulfides stabilise this stretch: Cys3-Cys24, Cys6-Cys11, Cys17-Cys42, Cys46-Cys57, and Cys58-Cys63.

This sequence belongs to the three-finger toxin family. Ancestral subfamily. Orphan group II sub-subfamily. As to expression, expressed by the venom gland.

It localises to the secreted. Binds with low affinity to muscular (alpha-1-beta-1-delta-epsilon/CHRNA1-CHRNB1-CHRND-CHRNE) and very low affinity to neuronal (alpha-7/CHRNA7) nicotinic acetylcholine receptor (nAChR). The protein is Weak toxin CM-10 of Naja nivea (Cape cobra).